A 412-amino-acid polypeptide reads, in one-letter code: CinA-like protein (412 aa).

The protein belongs to the CinA family.

The sequence is that of CinA-like protein from Kosmotoga olearia (strain ATCC BAA-1733 / DSM 21960 / TBF 19.5.1).